A 269-amino-acid chain; its full sequence is Diphthine synthase (269 aa).

S-adenosyl-L-methionine contacts are provided by residues leucine 10, aspartate 87, valine 90, 115–116, leucine 166, alanine 209, and histidine 234; that span reads SI.

This sequence belongs to the diphthine synthase family. In terms of assembly, homodimer.

The catalysed reaction is 2-[(3S)-amino-3-carboxypropyl]-L-histidyl-[translation elongation factor 2] + 3 S-adenosyl-L-methionine = diphthine-[translation elongation factor 2] + 3 S-adenosyl-L-homocysteine + 3 H(+). The protein operates within protein modification; peptidyl-diphthamide biosynthesis. Functionally, S-adenosyl-L-methionine-dependent methyltransferase that catalyzes the trimethylation of the amino group of the modified target histidine residue in translation elongation factor 2 (EF-2), to form an intermediate called diphthine. The three successive methylation reactions represent the second step of diphthamide biosynthesis. The chain is Diphthine synthase from Pyrococcus furiosus (strain ATCC 43587 / DSM 3638 / JCM 8422 / Vc1).